The chain runs to 232 residues: uncharacterized protein (232 aa).

5 helical membrane passes run 69–91, 104–126, 139–161, 166–188, and 200–219; these read LISA…YILF, FLEP…FFAL, FSRF…FFFL, ICFT…AMLS, and FIYS…QLII.

The protein localises to the cell membrane. This is an uncharacterized protein from Bacillus subtilis (strain 168).